The sequence spans 864 residues: N-alpha-acetyltransferase 16, NatA auxiliary subunit (864 aa).

7 TPR repeats span residues 46–79, 80–113, 148–184, 224–257, 374–407, 408–441, and 485–514; these read GETLAMKGLILNCLGKREEAYEFVRKGLRSDVRS, HVCWHVYGLLQRSDKKYDEAIKCYRNALKLDKDN, RASWIGYAIAYHLLKDYDTALKLLEEFRQTQQVPPNK, LLVEEIKGEMLLKLGRLKEASEVFRNLIDWNAEN, IWVQYFLAQHYDKLGQYFLALEYINAVIASTPTL, IELFYMKAKIYKHMGNLKEAAQWMDEAQSLDTAD, and MWFETECISAYQRLGRYGDALKKCHEVERH. A disordered region spans residues 594–646; that stretch reads KMLSKQRRAQKKAKVEEERKHTERERQQKNQKKKREEEEEVTSGHKEELIPEK. Residues 595 to 605 are compositionally biased toward basic residues; sequence MLSKQRRAQKK. Basic and acidic residues-rich tracts occupy residues 606–621 and 635–646; these read AKVEEERKHTERERQQ and TSGHKEELIPEK.

Component of the N-terminal acetyltransferase A (NatA) complex composed of NAA10 and NAA16. As to expression, highest levels in the kidney and testes. Moderate expression in the liver, thymus and skin.

Functionally, auxillary subunit of the N-terminal acetyltransferase A (NatA) complex which displays alpha (N-terminal) acetyltransferase activity. This is N-alpha-acetyltransferase 16, NatA auxiliary subunit (Naa16) from Mus musculus (Mouse).